Consider the following 1141-residue polypeptide: Putative late blight resistance protein homolog R1B-13 (1141 aa).

The stretch at 417 to 437 (DSLAFLKNQIQVIQMEFEILQ) forms a coiled coil. Positions 516-742 (TVITHTSSQL…LSIVLVADVL (227 aa)) constitute an NB-ARC domain. LRR repeat units follow at residues 826 to 851 (FKFL…PYLR), 869 to 894 (LWNL…VWDM), 992 to 1016 (APNL…TVDH), 1017 to 1041 (LKHL…VSNG), and 1043 to 1068 (FPQL…AFPI).

Belongs to the disease resistance NB-LRR family.

The protein localises to the cytoplasm. It is found in the membrane. Its function is as follows. Confers resistance to late blight (Phytophthora infestans) races carrying the avirulence gene Avr1. Resistance proteins guard the plant against pathogens that contain an appropriate avirulence protein via an indirect interaction with this avirulence protein. That triggers a defense system including the hypersensitive response, which restricts the pathogen growth. This is Putative late blight resistance protein homolog R1B-13 (R1B-13) from Solanum demissum (Wild potato).